A 412-amino-acid polypeptide reads, in one-letter code: Multifunctional CCA protein (412 aa).

Gly8 and Arg11 together coordinate ATP. Residues Gly8 and Arg11 each contribute to the CTP site. Mg(2+) is bound by residues Asp21 and Asp23. Arg91, Arg137, and Arg140 together coordinate ATP. The CTP site is built by Arg91, Arg137, and Arg140. The HD domain maps to 228–329; that stretch reads TGIHTLMTLS…VKLFDSIDAW (102 aa).

This sequence belongs to the tRNA nucleotidyltransferase/poly(A) polymerase family. Bacterial CCA-adding enzyme type 1 subfamily. In terms of assembly, monomer. Can also form homodimers and oligomers. Requires Mg(2+) as cofactor. Ni(2+) is required as a cofactor.

It catalyses the reaction a tRNA precursor + 2 CTP + ATP = a tRNA with a 3' CCA end + 3 diphosphate. It carries out the reaction a tRNA with a 3' CCA end + 2 CTP + ATP = a tRNA with a 3' CCACCA end + 3 diphosphate. Catalyzes the addition and repair of the essential 3'-terminal CCA sequence in tRNAs without using a nucleic acid template. Adds these three nucleotides in the order of C, C, and A to the tRNA nucleotide-73, using CTP and ATP as substrates and producing inorganic pyrophosphate. tRNA 3'-terminal CCA addition is required both for tRNA processing and repair. Also involved in tRNA surveillance by mediating tandem CCA addition to generate a CCACCA at the 3' terminus of unstable tRNAs. While stable tRNAs receive only 3'-terminal CCA, unstable tRNAs are marked with CCACCA and rapidly degraded. The sequence is that of Multifunctional CCA protein from Escherichia coli O8 (strain IAI1).